Here is a 65-residue protein sequence, read N- to C-terminus: Large ribosomal subunit protein uL29c (65 aa).

It belongs to the universal ribosomal protein uL29 family.

The protein localises to the plastid. Its subcellular location is the chloroplast. In Guillardia theta (Cryptophyte), this protein is Large ribosomal subunit protein uL29c (rpl29).